We begin with the raw amino-acid sequence, 479 residues long: Ribosomal RNA small subunit methyltransferase F (479 aa).

Residues 125-131 (AAAPGSK), Glu-149, Asp-176, and Asp-194 contribute to the S-adenosyl-L-methionine site. The Nucleophile role is filled by Cys-247.

This sequence belongs to the class I-like SAM-binding methyltransferase superfamily. RsmB/NOP family.

The protein localises to the cytoplasm. The catalysed reaction is cytidine(1407) in 16S rRNA + S-adenosyl-L-methionine = 5-methylcytidine(1407) in 16S rRNA + S-adenosyl-L-homocysteine + H(+). Its function is as follows. Specifically methylates the cytosine at position 1407 (m5C1407) of 16S rRNA. This Shigella boydii serotype 18 (strain CDC 3083-94 / BS512) protein is Ribosomal RNA small subunit methyltransferase F.